The sequence spans 456 residues: uncharacterized protein (456 aa).

Positions 5–63 (LVKKGQQISLKIKRLGINGEGIGYYKKLIIFVPGALPKEEVTATITNVTPKFAEGTLQS) constitute a TRAM domain. The [4Fe-4S] cluster site is built by C76, C82, C85, and C165. Residues Q289, Y318, D339, and D387 each contribute to the S-adenosyl-L-methionine site. C414 acts as the Nucleophile in catalysis.

This sequence belongs to the class I-like SAM-binding methyltransferase superfamily. RNA M5U methyltransferase family.

This is an uncharacterized protein from Enterococcus faecalis (strain ATCC 700802 / V583).